Here is a 4083-residue protein sequence, read N- to C-terminus: Dynein axonemal heavy chain 3 (4083 aa).

Disordered regions lie at residues 1–37 and 111–132; these read MSDTNCSAQKLDKSDSVHHMSHSQARPELPPLPVSAN and DKTSQGLPLGTSSKTSTEPSKK. Residues 1 to 1357 are stem; the sequence is MSDTNCSAQK…HVQMITTEAL (1357 aa). Coiled coils occupy residues 1026–1052 and 1108–1133; these read IKPIEAECRKWEEKLVRVQENLDAWLK and RMTEKLQEANVLLEDIQRGLNDYLEK. 4 AAA regions span residues 1358–1579, 1639–1870, 2003–2251, and 2362–2613; these read YGYE…VLTA, EALN…LHCK, TIPA…VIQG, and EFNS…LLRH. ATP-binding positions include 1396-1403, 1677-1684, 2041-2048, and 2401-2408; these read GPAGTGKT, GDPMGGKT, GPTGTGKS, and GIGGSGRQ. A stalk region spans residues 2628–2927; that stretch reads FKTLLNSKRQ…NSLEKNIEIC (300 aa). Residues 2651–2714 are a coiled coil; it reads QKLEFASSQV…DEKEANAAAA (64 aa). 2 AAA regions span residues 3012–3242 and 3455–3679; these read LGDP…EISE and IQNF…QIQM.

The protein belongs to the dynein heavy chain family. As to quaternary structure, consists of at least two heavy chains and a number of intermediate and light chains.

The protein resides in the cytoplasm. The protein localises to the cytoskeleton. It localises to the cilium axoneme. Force generating protein of respiratory cilia. Produces force towards the minus ends of microtubules. Dynein has ATPase activity; the force-producing power stroke is thought to occur on release of ADP. Involved in sperm motility; implicated in sperm flagellar assembly. The chain is Dynein axonemal heavy chain 3 (Dnah3) from Mus musculus (Mouse).